Consider the following 382-residue polypeptide: Galactokinase (382 aa).

34 to 37 (EHTD) is a substrate binding site. Residue 124–130 (GAGLSSS) participates in ATP binding. Positions 130 and 162 each coordinate Mg(2+). The active-site Proton acceptor is Asp-174. Tyr-223 contacts substrate.

This sequence belongs to the GHMP kinase family. GalK subfamily.

It is found in the cytoplasm. The catalysed reaction is alpha-D-galactose + ATP = alpha-D-galactose 1-phosphate + ADP + H(+). The protein operates within carbohydrate metabolism; galactose metabolism. Functionally, catalyzes the transfer of the gamma-phosphate of ATP to D-galactose to form alpha-D-galactose-1-phosphate (Gal-1-P). In Escherichia coli O9:H4 (strain HS), this protein is Galactokinase.